A 1048-amino-acid chain; its full sequence is MQETFKFLRCNSQGEAVEDKYSLKTLKNHFVVRDEYNNLFRVFSSRDDFWEWEADQPFEQKCFHEVVFGFFPQRLKFDIDFPVNKSYSEEDNDDNVYNILDIIINVIMDVFYETYSLPYNINLTREQILLTDSIGLNKKRELKYSFHIILYTYSVLNNNEAKAFTSKVLENLPKHVYPFVDPQVNKSIQNFRIIGSHKKGSMRVKMFNEELADVFETSMTTKKSDTLITTPFETTCLPCILTHVKEMTNSCDSIQQNELEEVLKFAGVLCKNHCFLRVHKNLVLFKRTSPSYCEICKRMHDKDNTLILRVAGNKVYQHCRHDNKHSLLMGSLSGTTNFVEIYVDQVMTKSIEVHESILFEELPDTQKHIYDESSMREYERVPTLVVKAQMKIGKTIQLRNYLQKYYGNDSISKQQTIRFVTFRQIFSKNIQTRLPNFTLYSEVTGDLDSYERVIIQVESLFRLTSTAEPVDLLILDEVESIFNQFNSGLHKYFAPSFAIFMWMLETANHVICLDANLGNRTYNILQRFRGDVPIFFHWNQYQKAQNDMYYFTSSREIWLNNLLKDLLEDKKIVIPTNSLMEARLLQTFIQKKFPEKKIGFYSSKSTAHERESHFNNVSYYWGLIDILIYTPTISAGVSYEDKRFDVLYGFFNNMSCDVETCCQMLGRVRELKSKTYKICLQGKQNYFPETIEDIETFTLQKRDTLFQTINNHQLSFTYSKETGRPIYYKTPYYHLWLETMRIQHLSKNHFITRFINQVADTGAKVFILTGEKLETVKQYTSIKMEIKHQDYVNIASAETIDANKALLIKQNLKEGITVDQQDLFAYEKYKLLEFYAWHGNKITPKFVEQYNSFMTKQNYTGRVQISRGKTVHESLTMLQTQELNFHQWAMQHAEHHDLQFNYSFQSHMYAIMLLTKCGFKCVQDPNILTNEQLMTKLVDEFVQYDLSAVSFEFKLKKPNKMDPQTILKFINKVLGIRYGLKIHHNKGNYYIKNTKAGSLIPFVRQQIKQSPCVVSNLLPITETFSTKEESSPTREETSSIKEKTFTET.

A disordered region spans residues 1025–1048 (STKEESSPTREETSSIKEKTFTET).

Belongs to the asfivirus F1055L family.

Its function is as follows. May be involved in DNA replication. The sequence is that of Putative helicase/primase complex protein from African swine fever virus (isolate Pig/Kenya/KEN-50/1950) (ASFV).